The chain runs to 142 residues: uncharacterized protein (142 aa).

The N-acetyltransferase domain maps to 1 to 120 (MADKFDANDE…TILKWEKNMD (120 aa)).

Belongs to the acetyltransferase family.

This is an uncharacterized protein from Streptococcus pyogenes serotype M1.